The chain runs to 348 residues: Selenide, water dikinase (348 aa).

Residue Cys-17 is part of the active site. ATP is bound by residues Lys-20 and 47–49 (THD). Asp-50 provides a ligand contact to Mg(2+). Residues Asp-67, Asp-90, and 138 to 140 (GHT) contribute to the ATP site. Residue Asp-90 participates in Mg(2+) binding. Asp-226 serves as a coordination point for Mg(2+).

This sequence belongs to the selenophosphate synthase 1 family. Class I subfamily. As to quaternary structure, homodimer. Mg(2+) is required as a cofactor.

The enzyme catalyses hydrogenselenide + ATP + H2O = selenophosphate + AMP + phosphate + 2 H(+). Its function is as follows. Synthesizes selenophosphate from selenide and ATP. The polypeptide is Selenide, water dikinase (Porphyromonas gingivalis (strain ATCC BAA-308 / W83)).